The sequence spans 2153 residues: RNA-directed RNA polymerase L (2153 aa).

Residues H36, E54, D97, E110, and V111 each coordinate Mn(2+). The active-site For endonuclease activity is K124. A RdRp catalytic domain is found at 957-1143; sequence TGKSIKFKRK…AINQEMWKSM (187 aa). A Mg(2+)-binding site is contributed by D1100.

Belongs to the Bunyavirales RNA polymerase family. In terms of assembly, interacts with the viral nucleoprotein. Mn(2+) is required as a cofactor. Mg(2+) serves as cofactor.

The protein resides in the host cytoplasm. It localises to the host perinuclear region. The enzyme catalyses RNA(n) + a ribonucleoside 5'-triphosphate = RNA(n+1) + diphosphate. RNA-dependent RNA polymerase, which is responsible for the replication and transcription of the viral RNA genome using antigenomic RNA as an intermediate. During transcription, synthesizes subgenomic RNAs and assures their capping by a cap-snatching mechanism, which involves the endonuclease activity cleaving the host capped pre-mRNAs. These short capped RNAs are then used as primers for viral transcription. Cleaves ssRNA substrates but not DNA. Seems to downregulate the expression of its own and heterologous mRNAs through its endonuclease activity. This Abrothrix longipilis (Long-haired grass mouse) protein is RNA-directed RNA polymerase L.